The sequence spans 274 residues: 2-dehydro-3-deoxyphosphooctonate aldolase (274 aa).

This sequence belongs to the KdsA family.

The protein resides in the cytoplasm. The enzyme catalyses D-arabinose 5-phosphate + phosphoenolpyruvate + H2O = 3-deoxy-alpha-D-manno-2-octulosonate-8-phosphate + phosphate. The protein operates within carbohydrate biosynthesis; 3-deoxy-D-manno-octulosonate biosynthesis; 3-deoxy-D-manno-octulosonate from D-ribulose 5-phosphate: step 2/3. It functions in the pathway bacterial outer membrane biogenesis; lipopolysaccharide biosynthesis. This chain is 2-dehydro-3-deoxyphosphooctonate aldolase, found in Rickettsia conorii (strain ATCC VR-613 / Malish 7).